We begin with the raw amino-acid sequence, 276 residues long: Small ribosomal subunit protein uS2 (276 aa).

The protein belongs to the universal ribosomal protein uS2 family.

This chain is Small ribosomal subunit protein uS2, found in Chlamydia caviae (strain ATCC VR-813 / DSM 19441 / 03DC25 / GPIC) (Chlamydophila caviae).